A 347-amino-acid chain; its full sequence is GMP reductase (347 aa).

Residue 108–131 (ADFQKTKDIMAISDEFIFICIDIA) participates in NADP(+) binding. K(+)-binding residues include glycine 181 and glycine 183. The Thioimidate intermediate role is filled by cysteine 186. 216–239 (IIGDGGCSCAGDVAKAFGGGADFV) contacts NADP(+).

The protein belongs to the IMPDH/GMPR family. GuaC type 1 subfamily. In terms of assembly, homotetramer.

It carries out the reaction IMP + NH4(+) + NADP(+) = GMP + NADPH + 2 H(+). Its function is as follows. Catalyzes the irreversible NADPH-dependent deamination of GMP to IMP. It functions in the conversion of nucleobase, nucleoside and nucleotide derivatives of G to A nucleotides, and in maintaining the intracellular balance of A and G nucleotides. This Vibrio campbellii (strain ATCC BAA-1116) protein is GMP reductase.